The chain runs to 155 residues: D-aminoacyl-tRNA deacylase (155 aa).

The Gly-cisPro motif, important for rejection of L-amino acids motif lies at 137–138 (GP).

Belongs to the DTD family. Homodimer.

Its subcellular location is the cytoplasm. The catalysed reaction is glycyl-tRNA(Ala) + H2O = tRNA(Ala) + glycine + H(+). It carries out the reaction a D-aminoacyl-tRNA + H2O = a tRNA + a D-alpha-amino acid + H(+). Its function is as follows. An aminoacyl-tRNA editing enzyme that deacylates mischarged D-aminoacyl-tRNAs. Also deacylates mischarged glycyl-tRNA(Ala), protecting cells against glycine mischarging by AlaRS. Acts via tRNA-based rather than protein-based catalysis; rejects L-amino acids rather than detecting D-amino acids in the active site. By recycling D-aminoacyl-tRNA to D-amino acids and free tRNA molecules, this enzyme counteracts the toxicity associated with the formation of D-aminoacyl-tRNA entities in vivo and helps enforce protein L-homochirality. The protein is D-aminoacyl-tRNA deacylase of Paracidovorax citrulli (strain AAC00-1) (Acidovorax citrulli).